We begin with the raw amino-acid sequence, 225 residues long: Imidazole glycerol phosphate synthase subunit HisH (225 aa).

Residues 3 to 225 (TIAIVDYGMG…LYRNFVDWQP (223 aa)) form the Glutamine amidotransferase type-1 domain. The active-site Nucleophile is the C82. Active-site residues include H205 and E207.

As to quaternary structure, heterodimer of HisH and HisF.

The protein resides in the cytoplasm. It catalyses the reaction 5-[(5-phospho-1-deoxy-D-ribulos-1-ylimino)methylamino]-1-(5-phospho-beta-D-ribosyl)imidazole-4-carboxamide + L-glutamine = D-erythro-1-(imidazol-4-yl)glycerol 3-phosphate + 5-amino-1-(5-phospho-beta-D-ribosyl)imidazole-4-carboxamide + L-glutamate + H(+). It carries out the reaction L-glutamine + H2O = L-glutamate + NH4(+). It functions in the pathway amino-acid biosynthesis; L-histidine biosynthesis; L-histidine from 5-phospho-alpha-D-ribose 1-diphosphate: step 5/9. IGPS catalyzes the conversion of PRFAR and glutamine to IGP, AICAR and glutamate. The HisH subunit catalyzes the hydrolysis of glutamine to glutamate and ammonia as part of the synthesis of IGP and AICAR. The resulting ammonia molecule is channeled to the active site of HisF. The polypeptide is Imidazole glycerol phosphate synthase subunit HisH (Bordetella bronchiseptica (strain ATCC BAA-588 / NCTC 13252 / RB50) (Alcaligenes bronchisepticus)).